Here is a 206-residue protein sequence, read N- to C-terminus: Large ribosomal subunit protein uL13 (206 aa).

This sequence belongs to the universal ribosomal protein uL13 family.

In Picea mariana (Black spruce), this protein is Large ribosomal subunit protein uL13 (RPL13A).